The sequence spans 375 residues: Chlorophyll a/b light-harvesting protein PcbC (375 aa).

6 consecutive transmembrane segments (helical) span residues 40-60, 102-122, 151-171, 225-245, 262-282, and 300-320; these read LLGA…SITV, YFVI…GGLF, LSLI…AFVA, IIGG…WHIL, AILS…GFFV, and GAAA…VWHA. Positions 352 to 375 are disordered; that stretch reads ARTFIGRGKPQPEPPKKKGLFGRG.

The protein belongs to the PsbB/PsbC family. IsiA/Pcb subfamily. The antenna complex consists of chlorophylls (a and b) and chlorophyll a/b binding proteins. It depends on chlorophyll a as a cofactor. Chlorophyll b serves as cofactor.

Its subcellular location is the cellular thylakoid membrane. In terms of biological role, the antenna complex functions as a light receptor, it captures and delivers excitation energy to photosystems II and I. The Prochlorales pcb genes are not related to higher plant LHCs. The chain is Chlorophyll a/b light-harvesting protein PcbC (pcbC) from Prochlorothrix hollandica.